Reading from the N-terminus, the 430-residue chain is 3-phosphoshikimate 1-carboxyvinyltransferase (430 aa).

The 3-phosphoshikimate site is built by Lys-25, Ser-26, and Arg-30. Lys-25 contributes to the phosphoenolpyruvate binding site. Phosphoenolpyruvate contacts are provided by Gly-97 and Arg-125. Residues Ser-170, Gln-172, Asp-318, and Lys-345 each coordinate 3-phosphoshikimate. Residue Gln-172 coordinates phosphoenolpyruvate. Catalysis depends on Asp-318, which acts as the Proton acceptor. Phosphoenolpyruvate is bound by residues Arg-349 and Arg-391.

Belongs to the EPSP synthase family. Monomer.

The protein resides in the cytoplasm. The catalysed reaction is 3-phosphoshikimate + phosphoenolpyruvate = 5-O-(1-carboxyvinyl)-3-phosphoshikimate + phosphate. The protein operates within metabolic intermediate biosynthesis; chorismate biosynthesis; chorismate from D-erythrose 4-phosphate and phosphoenolpyruvate: step 6/7. Its function is as follows. Catalyzes the transfer of the enolpyruvyl moiety of phosphoenolpyruvate (PEP) to the 5-hydroxyl of shikimate-3-phosphate (S3P) to produce enolpyruvyl shikimate-3-phosphate and inorganic phosphate. This Shouchella clausii (strain KSM-K16) (Alkalihalobacillus clausii) protein is 3-phosphoshikimate 1-carboxyvinyltransferase.